Reading from the N-terminus, the 383-residue chain is Lipid-A-disaccharide synthase (383 aa).

Belongs to the LpxB family.

The enzyme catalyses a lipid X + a UDP-2-N,3-O-bis[(3R)-3-hydroxyacyl]-alpha-D-glucosamine = a lipid A disaccharide + UDP + H(+). It functions in the pathway bacterial outer membrane biogenesis; LPS lipid A biosynthesis. Its function is as follows. Condensation of UDP-2,3-diacylglucosamine and 2,3-diacylglucosamine-1-phosphate to form lipid A disaccharide, a precursor of lipid A, a phosphorylated glycolipid that anchors the lipopolysaccharide to the outer membrane of the cell. The polypeptide is Lipid-A-disaccharide synthase (Trichlorobacter lovleyi (strain ATCC BAA-1151 / DSM 17278 / SZ) (Geobacter lovleyi)).